A 245-amino-acid polypeptide reads, in one-letter code: DNA polymerase sliding clamp (245 aa).

This sequence belongs to the PCNA family. Homotrimer. The subunits circularize to form a toroid; DNA passes through its center. Replication factor C (RFC) is required to load the toroid on the DNA.

Its function is as follows. Sliding clamp subunit that acts as a moving platform for DNA processing. Responsible for tethering the catalytic subunit of DNA polymerase and other proteins to DNA during high-speed replication. This chain is DNA polymerase sliding clamp, found in Methanosarcina acetivorans (strain ATCC 35395 / DSM 2834 / JCM 12185 / C2A).